The following is a 468-amino-acid chain: UDP-N-acetylmuramate--L-alanine ligase (468 aa).

112–118 (GTHGKTT) provides a ligand contact to ATP.

It belongs to the MurCDEF family.

It is found in the cytoplasm. The catalysed reaction is UDP-N-acetyl-alpha-D-muramate + L-alanine + ATP = UDP-N-acetyl-alpha-D-muramoyl-L-alanine + ADP + phosphate + H(+). Its pathway is cell wall biogenesis; peptidoglycan biosynthesis. Cell wall formation. The chain is UDP-N-acetylmuramate--L-alanine ligase from Bordetella petrii (strain ATCC BAA-461 / DSM 12804 / CCUG 43448).